We begin with the raw amino-acid sequence, 534 residues long: Serine protease vicPb (534 aa).

Positions Met1 to Gly17 are cleaved as a signal peptide. 3 N-linked (GlcNAc...) asparagine glycosylation sites follow: Asn34, Asn65, and Asn126. Catalysis depends on Ser174, which acts as the Charge relay system. 5 N-linked (GlcNAc...) asparagine glycosylation sites follow: Asn297, Asn335, Asn352, Asn415, and Asn437. Asp451 serves as the catalytic Charge relay system.

This sequence belongs to the peptidase S28 family.

The protein operates within mycotoxin biosynthesis. In terms of biological role, serine protease, part of the gene cluster that mediates the biosynthesis of the secondary metabolite victorin, the molecular basis for Victoria blight of oats. Within the pathway, vicPa and vicPb are probably involved in the processing of the vicA1 and vicA2 precursors. The pathway starts with the processing of the precursor vicA1 by several endopeptidases including kexin proteases as well as the cluster-specific S28 family peptidases vicPa and vicPb to produce 7 identical copies of the hexapeptide Gly-Leu-Lys-Leu-Ala-Phe. After being excised from the precursor peptide, the core peptides are cyclized and modified post-translationally by enzymes encoded within the gene cluster. The ustYa family oxidase vicYb is required for the formation of the macrocycle in victorin and the copper amine oxidases (CAOs) vicK1 and vicK2 are responsible for converting victorin to the active form by oxidizing the N-terminal glycyl residue in the peptides to glyoxylate. Relaxed substrate specificity of enzymes in the victorin biosynthetic pathway results in a metabolic grid that produces a set of analogs including victorinines B, C, E or HV-toxin M. The chain is Serine protease vicPb from Bipolaris victoriae (strain FI3) (Victoria blight of oats agent).